Here is a 633-residue protein sequence, read N- to C-terminus: Chaperone protein HtpG (633 aa).

The interval 1–344 (MSLQPQAETL…SNDLPLNISR (344 aa)) is a; substrate-binding. The b stretch occupies residues 345 to 560 (ELLQSNEVIN…ENEMSGHLQR (216 aa)). Residues 561–633 (LLIQTGQDFM…KGLNELLLDS (73 aa)) form a c region.

The protein belongs to the heat shock protein 90 family. In terms of assembly, homodimer.

It localises to the cytoplasm. In terms of biological role, molecular chaperone. Has ATPase activity. This Coxiella burnetii (strain RSA 331 / Henzerling II) protein is Chaperone protein HtpG.